A 223-amino-acid chain; its full sequence is Pre-protein VI (223 aa).

Residues M1–G28 constitute a propeptide that is removed on maturation. The amphipathic alpha-helix essential for membrane lytic activity stretch occupies residues A29–T53. Residues N31–N52 form an involved in endosomal membrane lysis region. Residues G47–S73 form an interaction with hexon protein region. Residues I66–V75 carry the Nuclear export signal motif. Disordered stretches follow at residues E136 to R155 and P166 to R203. The span at P138–V151 shows a compositional bias: pro residues. Positions P166–T182 are enriched in low complexity. Basic residues predominate over residues P189–R198. The short motif at A204 to A215 is the Nuclear export signal element. Residues L206 to T212 are interaction with hexon protein. The interval G213–Y223 is binds to importin alpha/beta, involved in hexon nuclear import.

The protein belongs to the adenoviridae protein VI family. In terms of assembly, interacts with hexon protein; this interaction allows nuclear import of hexon trimers and possibly pre-capsid assembly. Interacts (via C-terminal NLS) with importin alpha/beta. As to quaternary structure, interacts (via PPxY motif) with host NEDD4 ubiquitine ligase; this interaction might play a role in virus intracellular transport during entry. Part of a complex composed of the core-capsid bridging protein, the endosome lysis protein VI and the hexon-linking protein VIII; these interactions bridge the virus core to the capsid. Interacts with peripentonal hexons; this interaction stabilizes the capsid by gluing two peripentonal hexons together and joining them with an adjacent group-of-nine hexon. Heterodimer with the viral protease; disulfide-linked. Interacts with the viral protease. Post-translationally, ubiquitinated by Nedd4 following partial capsid disassembly; which might play a role in intracellular virus movement during entry. Contains the major nuclear import and export signals. Proteolytically removed during virion maturation. The processing of the C-terminus turns the precursor into a mature viral structural protein and abrogates its ability to promote hexon import and act as a potential chaperone protein.

It localises to the host nucleus. The protein resides in the host cytoplasm. Its subcellular location is the virion. In terms of biological role, during virus assembly, promotes hexon trimers nuclear import through nuclear pore complexes via an importin alpha/beta-dependent mechanism. By analogy to herpesviruses capsid assembly, might act as a chaperone to promote the formation of the icosahedral capsid. Functionally, structural component of the virion that provides increased stability to the particle shell through its interaction with the core-capsid bridging protein and the hexon-linking protein VIII. Fibers shedding during virus entry into host cell allows the endosome lysis protein to be exposed as a membrane-lytic peptide. Exhibits pH-independent membrane fragmentation activity and probably mediates viral rapid escape from host endosome via organellar membrane lysis. It is not clear if it then remains partially associated with the capsid and involved in the intracellular microtubule-dependent transport of capsid to the nucleus, or if it is lost during endosomal penetration. Its function is as follows. Cofactor that activates the viral protease. Binds to viral protease in a 1:1 ratio. In Fowl adenovirus A serotype 1 (strain CELO / Phelps) (FAdV-1), this protein is Pre-protein VI.